The primary structure comprises 23 residues: Coenzyme PQQ synthesis protein A (23 aa).

Residues 15-19 constitute a cross-link (pyrroloquinoline quinone (Glu-Tyr)); sequence EVTMY.

This sequence belongs to the PqqA family.

The protein operates within cofactor biosynthesis; pyrroloquinoline quinone biosynthesis. In terms of biological role, required for coenzyme pyrroloquinoline quinone (PQQ) biosynthesis. PQQ is probably formed by cross-linking a specific glutamate to a specific tyrosine residue and excising these residues from the peptide. The sequence is that of Coenzyme PQQ synthesis protein A from Pseudomonas putida (strain W619).